Consider the following 246-residue polypeptide: Small ribosomal subunit protein uS2 (246 aa).

The protein belongs to the universal ribosomal protein uS2 family.

The protein is Small ribosomal subunit protein uS2 of Burkholderia thailandensis (strain ATCC 700388 / DSM 13276 / CCUG 48851 / CIP 106301 / E264).